The following is an 818-amino-acid chain: H(+)/Cl(-) exchange transporter 3 (818 aa).

Residues 1-125 (MESEQLFHRG…WEMTKSLYDA (125 aa)) lie on the Cytoplasmic side of the membrane. 3 short sequence motifs (di-leucine internalization motif; mediates targeting to late endosome and lysosome membranes) span residues 28 to 29 (LL), 46 to 47 (LL), and 71 to 75 (LLDLL). A helical membrane pass occupies residues 126–163 (WSGWLVVTLTGLASGALAGLIDIAADWMTDLKEGICLS). The N-linked (GlcNAc...) asparagine glycan is linked to asparagine 177. The chain crosses the membrane as a helical span at residues 209–232 (MNYIMYIFWALSFAFLAVSLVKVF). The short motif at 238–242 (GSGIP) is the Selectivity filter part_1 element. Position 239 (serine 239) interacts with chloride. The segment at residues 241–248 (IPEIKTIL) is an intramembrane region (helical). Transmembrane regions (helical) follow at residues 258-276 (GKWTLMIKTITLVLAVASG) and 282-301 (EGPLVHVACCCGNIFSYLFP). The short motif at 280 to 284 (GKEGP) is the Selectivity filter part_2 element. 2 intramembrane regions (helical) span residues 313–325 (VLSAASAAGVSVA) and 329–337 (PIGGVLFSL). A run of 3 helical transmembrane segments spans residues 349-367 (LWRSFFAALVAAFVLRSIN), 391-416 (FPFILLGVFGGLWGAFFIRANIAWCR), and 423-443 (FGKYPVLEVIIVAAITAVIAF). Residues asparagine 451 and asparagine 479 are each glycosylated (N-linked (GlcNAc...) asparagine). 2 helical membrane passes run 500 to 520 (IWQLCLALIFKIIMTVFTFGI) and 525 to 544 (GLFIPSMAIGAIAGRIVGIA). The Selectivity filter part_3 motif lies at 525–529 (GLFIP). Residue phenylalanine 527 participates in chloride binding. Intramembrane regions (helical) lie at residues 572-586 (GLYAMVGAAACLGGV) and 590-601 (TVSLVVIVFELT). Residues 602 to 605 (GGLE) constitute an intramembrane region (note=Loop between two helices). Residues 606–624 (YIVPLMAAVMTSKWVGDAF) form a helical membrane-spanning segment. Topologically, residues 625–818 (GREGIYEAHI…NQDPASIMFN (194 aa)) are cytoplasmic. Tyrosine 630 serves as a coordination point for chloride. 2 consecutive CBS domains span residues 658-722 (MRPR…ARKK) and 755-812 (LDMS…NQDP). Residues 689–691 (YNG) and 796–799 (TKKD) contribute to the ATP site.

Belongs to the chloride channel (TC 2.A.49) family. ClC-3/CLCN3 subfamily. Monomer and homodimer. Forms heterodimers with CLCN4. As to quaternary structure, interacts with GOPC, PDZK1 and NHERF1/EBP50. Post-translationally, N-glycosylated. In terms of tissue distribution, expressed primarily in tissues derived from neuroectoderm. Within the brain, its expression is particularly evident in the hippocampus, olfactory cortex, and olfactory bulb. Highly expressed in aortic and coronary vascular smooth muscle cells, and aortic endothelial cells. Also expressed in tracheal and alveolar epithelial cells, and intima and media of the pulmonary vessels. Expressed in bronchus and colon (at protein level).

The protein localises to the early endosome membrane. It localises to the late endosome membrane. Its subcellular location is the lysosome membrane. It is found in the cell membrane. The protein resides in the golgi apparatus membrane. The protein localises to the cell projection. It localises to the ruffle membrane. Functionally, strongly outwardly rectifying, electrogenic H(+)/Cl(-)exchanger which mediates the exchange of chloride ions against protons. The CLC channel family contains both chloride channels and proton-coupled anion transporters that exchange chloride or another anion for protons. The presence of conserved gating glutamate residues is typical for family members that function as antiporters. In terms of biological role, strongly outwardly rectifying, electrogenic H(+)/Cl(-)exchanger which mediates the exchange of chloride ions against protons. The chain is H(+)/Cl(-) exchange transporter 3 (CLCN3) from Homo sapiens (Human).